Consider the following 460-residue polypeptide: Cysteine--tRNA ligase (460 aa).

Zn(2+) is bound at residue Cys28. The short motif at 30 to 40 (MTVYDYCHLGH) is the 'HIGH' region element. 3 residues coordinate Zn(2+): Cys209, His234, and Glu238. The 'KMSKS' region motif lies at 266 to 270 (KMSKS). An ATP-binding site is contributed by Lys269.

It belongs to the class-I aminoacyl-tRNA synthetase family. In terms of assembly, monomer. Zn(2+) is required as a cofactor.

The protein localises to the cytoplasm. It carries out the reaction tRNA(Cys) + L-cysteine + ATP = L-cysteinyl-tRNA(Cys) + AMP + diphosphate. The chain is Cysteine--tRNA ligase from Thioalkalivibrio sulfidiphilus (strain HL-EbGR7).